The sequence spans 111 residues: Large ribosomal subunit protein uL24 (111 aa).

The protein belongs to the universal ribosomal protein uL24 family. As to quaternary structure, part of the 50S ribosomal subunit.

One of two assembly initiator proteins, it binds directly to the 5'-end of the 23S rRNA, where it nucleates assembly of the 50S subunit. Functionally, one of the proteins that surrounds the polypeptide exit tunnel on the outside of the subunit. The protein is Large ribosomal subunit protein uL24 of Streptococcus pneumoniae (strain Hungary19A-6).